We begin with the raw amino-acid sequence, 439 residues long: Fibroleukin (439 aa).

The first 23 residues, 1–23 (MKLANWYWLSSAVLATYGFLVVA), serve as a signal peptide directing secretion. N25 carries an N-linked (GlcNAc...) asparagine glycan. Positions 73–165 (SRIEEVFKEV…GRLEKLNLVN (93 aa)) form a coiled coil. The disordered stretch occupies residues 103–126 (ADDNGDPGRNGLLLPSTGAPGEVG). N-linked (GlcNAc...) asparagine glycosylation is found at N179, N235, N263, and N336. One can recognise a Fibrinogen C-terminal domain in the interval 204 to 436 (PVQHLIYKDC…EAKMMIRPKH (233 aa)). C213 and C242 are oxidised to a cystine. C371 and C384 form a disulfide bridge.

Homotetramer; disulfide-linked. Constitutively expressed in cytotoxic T-cells.

Its subcellular location is the secreted. Functionally, may play a role in physiologic lymphocyte functions at mucosal sites. This is Fibroleukin (FGL2) from Homo sapiens (Human).